A 297-amino-acid polypeptide reads, in one-letter code: GTPase Era (297 aa).

In terms of domain architecture, Era-type G spans 3–171 (KSGFVSIVGR…IKVIQNYLEE (169 aa)). The segment at 11–18 (GRPNVGKS) is G1. 11 to 18 (GRPNVGKS) contacts GTP. The G2 stretch occupies residues 37-41 (QTTRN). Residues 58–61 (DTPG) form a G3 region. GTP contacts are provided by residues 58 to 62 (DTPGI) and 120 to 123 (NKID). The tract at residues 120-123 (NKID) is G4. The interval 150 to 152 (ISA) is G5. One can recognise a KH type-2 domain in the interval 194 to 280 (IREKVLHYLN…NLQLWVKVKE (87 aa)).

This sequence belongs to the TRAFAC class TrmE-Era-EngA-EngB-Septin-like GTPase superfamily. Era GTPase family. In terms of assembly, monomer.

It localises to the cytoplasm. It is found in the cell membrane. In terms of biological role, an essential GTPase that binds both GDP and GTP, with rapid nucleotide exchange. Plays a role in 16S rRNA processing and 30S ribosomal subunit biogenesis and possibly also in cell cycle regulation and energy metabolism. This Clostridioides difficile (strain 630) (Peptoclostridium difficile) protein is GTPase Era.